The sequence spans 227 residues: Ribose-5-phosphate isomerase A (227 aa).

Residues 26-29, 82-85, and 95-98 contribute to the substrate site; these read TGST, DGAD, and KGGG. The active-site Proton acceptor is E104. A substrate-binding site is contributed by K122.

The protein belongs to the ribose 5-phosphate isomerase family. In terms of assembly, homodimer.

The catalysed reaction is aldehydo-D-ribose 5-phosphate = D-ribulose 5-phosphate. It functions in the pathway carbohydrate degradation; pentose phosphate pathway; D-ribose 5-phosphate from D-ribulose 5-phosphate (non-oxidative stage): step 1/1. Catalyzes the reversible conversion of ribose-5-phosphate to ribulose 5-phosphate. This is Ribose-5-phosphate isomerase A from Streptococcus pneumoniae serotype 2 (strain D39 / NCTC 7466).